A 435-amino-acid chain; its full sequence is Casein kinase I homolog 2 (435 aa).

In terms of domain architecture, Protein kinase spans 12–282 (YRVGRKIGEG…FLQELFDDVL (271 aa)). ATP is bound by residues 18–26 (IGEGSFGVI) and Lys-41. Residue Asp-131 is the Proton acceptor of the active site. Ser-361 carries the phosphoserine modification.

The protein belongs to the protein kinase superfamily. CK1 Ser/Thr protein kinase family. Casein kinase I subfamily.

The protein localises to the cytoplasm. The enzyme catalyses L-seryl-[protein] + ATP = O-phospho-L-seryl-[protein] + ADP + H(+). It catalyses the reaction L-threonyl-[protein] + ATP = O-phospho-L-threonyl-[protein] + ADP + H(+). Functionally, casein kinases are operationally defined by their preferential utilization of acidic proteins such as caseins as substrates. May contribute to the regulation of morphology. In Schizosaccharomyces pombe (strain 972 / ATCC 24843) (Fission yeast), this protein is Casein kinase I homolog 2 (cki2).